Reading from the N-terminus, the 179-residue chain is TM2 domain-containing protein Y66D12A.21 (179 aa).

The first 18 residues, 1-18 (MRQLLLTLSLISVSASDA), serve as a signal peptide directing secretion. Topologically, residues 19 to 82 (TVKCDDLDPN…IFNRTVPSAC (64 aa)) are extracellular. A glycan (N-linked (GlcNAc...) asparagine) is linked at Asn75. Residues 83 to 105 (HYGAHVSYTTTVLLSIFLGFFGI) traverse the membrane as a helical segment. The 48-residue stretch at 88–135 (VSYTTTVLLSIFLGFFGIDRIYLGYYALGLIKMFSLGGLFVFWLVDII) folds into the TM2 domain. Residues 106-109 (DRIY) lie on the Cytoplasmic side of the membrane. The chain crosses the membrane as a helical span at residues 110–132 (LGYYALGLIKMFSLGGLFVFWLV). Residues 133-179 (DIILISLQLLGPADGTAYAMAYYGPKAQMIRFDSHTNFSFYTCDGCL) lie on the Extracellular side of the membrane. An N-linked (GlcNAc...) asparagine glycan is attached at Asn169.

It belongs to the TM2 family.

It localises to the membrane. In Caenorhabditis elegans, this protein is TM2 domain-containing protein Y66D12A.21.